The primary structure comprises 177 residues: Ubiquinol-cytochrome c reductase iron-sulfur subunit (177 aa).

The helical transmembrane segment at 18-38 threads the bilayer; it reads MVLTASSVAAIGAVCTLWPLV. In terms of domain architecture, Rieske spans 88–175; it reads ARAVKMSELI…YTFISDKKIR (88 aa). The [2Fe-2S] cluster site is built by cysteine 120, histidine 122, cysteine 139, and histidine 142. The cysteines at positions 125 and 141 are disulfide-linked.

Belongs to the Rieske iron-sulfur protein family. The main subunits of complex b-c1 are: cytochrome b, cytochrome c1 and the Rieske protein. [2Fe-2S] cluster is required as a cofactor.

The protein resides in the cell membrane. The enzyme catalyses a quinol + 2 Fe(III)-[cytochrome c](out) = a quinone + 2 Fe(II)-[cytochrome c](out) + 2 H(+)(out). Functionally, component of the ubiquinol-cytochrome c reductase complex (complex III or cytochrome b-c1 complex), which is a respiratory chain that generates an electrochemical potential coupled to ATP synthesis. This is Ubiquinol-cytochrome c reductase iron-sulfur subunit (petA) from Rickettsia conorii (strain ATCC VR-613 / Malish 7).